The chain runs to 156 residues: Small ribosomal subunit protein uS7 (156 aa).

The protein belongs to the universal ribosomal protein uS7 family. As to quaternary structure, part of the 30S ribosomal subunit. Contacts proteins S9 and S11.

Its function is as follows. One of the primary rRNA binding proteins, it binds directly to 16S rRNA where it nucleates assembly of the head domain of the 30S subunit. Is located at the subunit interface close to the decoding center, probably blocks exit of the E-site tRNA. The polypeptide is Small ribosomal subunit protein uS7 (Geotalea uraniireducens (strain Rf4) (Geobacter uraniireducens)).